A 403-amino-acid polypeptide reads, in one-letter code: S-adenosylmethionine synthase (403 aa).

His17 contacts ATP. Asp19 provides a ligand contact to Mg(2+). Glu45 provides a ligand contact to K(+). Glu58 and Gln104 together coordinate L-methionine. Residues Gln104–Thr114 form a flexible loop region. ATP-binding positions include Asp179–Lys181, Lys250–Phe251, Asp259, Arg265–Lys266, Ala282, and Lys286. Asp259 contacts L-methionine. Lys290 lines the L-methionine pocket.

Belongs to the AdoMet synthase family. As to quaternary structure, homotetramer; dimer of dimers. Mg(2+) serves as cofactor. It depends on K(+) as a cofactor.

It is found in the cytoplasm. The catalysed reaction is L-methionine + ATP + H2O = S-adenosyl-L-methionine + phosphate + diphosphate. It participates in amino-acid biosynthesis; S-adenosyl-L-methionine biosynthesis; S-adenosyl-L-methionine from L-methionine: step 1/1. Catalyzes the formation of S-adenosylmethionine (AdoMet) from methionine and ATP. The overall synthetic reaction is composed of two sequential steps, AdoMet formation and the subsequent tripolyphosphate hydrolysis which occurs prior to release of AdoMet from the enzyme. The polypeptide is S-adenosylmethionine synthase (Mycobacterium bovis (strain ATCC BAA-935 / AF2122/97)).